Reading from the N-terminus, the 114-residue chain is Evasin-1 (114 aa).

Positions 1 to 20 are cleaved as a signal peptide; it reads MTFKACIAIITALCAMQVIC. Intrachain disulfides connect Cys32–Cys53, Cys49–Cys90, Cys66–Cys95, and Cys85–Cys104. Residues Asn39, Asn54, and Asn62 are each glycosylated (N-linked (GlcNAc...) asparagine).

The protein belongs to the evasin C8 family. In terms of assembly, monomer.

It is found in the secreted. Salivary chemokine-binding protein which shows chemokine neutralizing activity and binds to host chemokines CCL3, CCL4 and CCL18. Binds to CCL3 with 1:1 stoichiometry. This chain is Evasin-1, found in Rhipicephalus sanguineus (Brown dog tick).